A 110-amino-acid polypeptide reads, in one-letter code: Replication initiation control protein YabA (110 aa).

Zn(2+)-binding residues include H84, C86, C100, and C103.

Belongs to the YabA family. Homotetramer. Interacts with both DnaA and DnaN, acting as a bridge between these two proteins. Requires Zn(2+) as cofactor.

Its subcellular location is the cytoplasm. The protein localises to the nucleoid. Involved in control of chromosome replication initiation. Inhibits the cooperative binding of DnaA to the oriC region, thus negatively regulating initiation of chromosome replication. Inhibits the ability of DnaA-ATP to form a helix on DNA; does not disassemble preformed DnaA-DNA helices. Decreases the residence time of DnaA on the chromosome at its binding sites (oriC, replication forks and promoter-binding sites). Tethers DnaA to the replication machinery via the DNA polymerase beta sliding clamp subunit (dnaN). Associates with oriC and other DnaA targets on the chromosome in a DnaA-dependent manner. In Streptococcus mutans serotype c (strain ATCC 700610 / UA159), this protein is Replication initiation control protein YabA.